The chain runs to 207 residues: tRNA (pseudouridine(54)-N(1))-methyltransferase (207 aa).

Leu-137 is an S-adenosyl-L-methionine binding site.

The protein belongs to the methyltransferase superfamily. TrmY family. In terms of assembly, homodimer.

The protein resides in the cytoplasm. It carries out the reaction pseudouridine(54) in tRNA + S-adenosyl-L-methionine = N(1)-methylpseudouridine(54) in tRNA + S-adenosyl-L-homocysteine + H(+). Specifically catalyzes the N1-methylation of pseudouridine at position 54 (Psi54) in tRNAs. In Halorubrum lacusprofundi (strain ATCC 49239 / DSM 5036 / JCM 8891 / ACAM 34), this protein is tRNA (pseudouridine(54)-N(1))-methyltransferase.